A 380-amino-acid polypeptide reads, in one-letter code: Cytochrome b (380 aa).

A run of 4 helical transmembrane segments spans residues 33–53 (FGSL…FLAM), 77–98 (WLIR…YMHI), 113–133 (WNIG…GYVL), and 178–198 (FFAF…LHLL). His83 and His97 together coordinate heme b. Heme b contacts are provided by His182 and His196. A ubiquinone is bound at residue His201. A run of 4 helical transmembrane segments spans residues 226 to 246 (YKDL…ALFA), 288 to 308 (LGGV…PILH), 320 to 340 (LTQF…WIGG), and 347 to 367 (FIII…VLSP).

Belongs to the cytochrome b family. The cytochrome bc1 complex contains 3 respiratory subunits (MT-CYB, CYC1 and UQCRFS1), 2 core proteins (UQCRC1 and UQCRC2) and probably 6 low-molecular weight proteins. The cofactor is heme b.

It localises to the mitochondrion inner membrane. Functionally, component of the ubiquinol-cytochrome c reductase complex (complex III or cytochrome b-c1 complex) that is part of the mitochondrial respiratory chain. The b-c1 complex mediates electron transfer from ubiquinol to cytochrome c. Contributes to the generation of a proton gradient across the mitochondrial membrane that is then used for ATP synthesis. The protein is Cytochrome b (mt-cyb) of Oncorhynchus keta (Chum salmon).